Here is a 336-residue protein sequence, read N- to C-terminus: DNA-directed RNA polymerase subunit alpha (336 aa).

The interval 1–233 is alpha N-terminal domain (alpha-NTD); the sequence is MSSNSFLTPR…EQFSFFADLE (233 aa). Residues 247–336 form an alpha C-terminal domain (alpha-CTD) region; it reads IDPILLRPVD…YIKEPGHASS (90 aa).

This sequence belongs to the RNA polymerase alpha chain family. In terms of assembly, homodimer. The RNAP catalytic core consists of 2 alpha, 1 beta, 1 beta' and 1 omega subunit. When a sigma factor is associated with the core the holoenzyme is formed, which can initiate transcription.

It catalyses the reaction RNA(n) + a ribonucleoside 5'-triphosphate = RNA(n+1) + diphosphate. In terms of biological role, DNA-dependent RNA polymerase catalyzes the transcription of DNA into RNA using the four ribonucleoside triphosphates as substrates. The sequence is that of DNA-directed RNA polymerase subunit alpha from Nitrosomonas europaea (strain ATCC 19718 / CIP 103999 / KCTC 2705 / NBRC 14298).